Reading from the N-terminus, the 236-residue chain is Reticulon-3 (236 aa).

Residues 1 to 24 (MAEPSAATQSPSISSSSSGAEPSA) are compositionally biased toward low complexity. Residues 1–31 (MAEPSAATQSPSISSSSSGAEPSAPGGGGSP) are disordered. Residue Ala2 is modified to N-acetylalanine. Residues 2–67 (AEPSAATQSP…KKTGFVFGTT (66 aa)) lie on the Cytoplasmic side of the membrane. Ser30 is subject to Phosphoserine. A Reticulon domain is found at 48-236 (VHDLIFWRDV…LPGIAKKKAE (189 aa)). An intramembrane region (helical) is located at residues 68–91 (LIMLLSLAAFSVISVVSYLILALL). Over 92–151 (SVTISFRIYKSVIQAVQKSEEGHPFKAYLDVDITLSSEAFHNYMNAAMVHINRALKLIIR) the chain is Cytoplasmic. Residues 152–172 (LFLVEDLVDSLKLAVFMWLMT) constitute an intramembrane region (helical). Residues 173–176 (YVGA) lie on the Cytoplasmic side of the membrane. An intramembrane region (helical) is located at residues 177–197 (VFNGITLLILAELLIFSVPIV). The segment at 191 to 236 (IFSVPIVYEKYKTQIDHYVGIARDQTKSIVEKIQAKLPGIAKKKAE) is interaction with FADD. The Cytoplasmic segment spans residues 198-236 (YEKYKTQIDHYVGIARDQTKSIVEKIQAKLPGIAKKKAE). The interaction with BACE1 stretch occupies residues 204–206 (QID).

In terms of assembly, homodimer. Interacts with RTN4. Interacts with BACE1, BACE2, BCL2 and FADD. Interacts with ATL1 and ATL2. Interacts with TMEM33. Interacts with ZFYVE27 and with KIF5A in a ZFYVE27-dependent manner. Interacts with RIGI. Interacts with TRIM25.

The protein resides in the endoplasmic reticulum membrane. It is found in the golgi apparatus membrane. In terms of biological role, may be involved in membrane trafficking in the early secretory pathway. Inhibits BACE1 activity and amyloid precursor protein processing. May induce caspase-8 cascade and apoptosis. May favor BCL2 translocation to the mitochondria upon endoplasmic reticulum stress. Induces the formation of endoplasmic reticulum tubules. Acts also as an inflammation-resolving regulator by interacting with both TRIM25 and RIGI, subsequently impairing RIGI 'Lys-63'-linked polyubiquitination leading to IRF3 and NF-kappa-B inhibition. This Pongo abelii (Sumatran orangutan) protein is Reticulon-3 (RTN3).